A 332-amino-acid chain; its full sequence is Glycerol-3-phosphate dehydrogenase [NAD(P)+] 2 (332 aa).

Residues serine 17, tryptophan 18, arginine 37, and lysine 112 each coordinate NADPH. Lysine 112 and glycine 140 together coordinate sn-glycerol 3-phosphate. NADPH is bound at residue alanine 144. Residues lysine 195, aspartate 243, serine 253, arginine 254, and asparagine 255 each coordinate sn-glycerol 3-phosphate. Lysine 195 acts as the Proton acceptor in catalysis. Residue arginine 254 participates in NADPH binding. Valine 278 and glutamate 280 together coordinate NADPH.

It belongs to the NAD-dependent glycerol-3-phosphate dehydrogenase family.

The protein resides in the cytoplasm. The enzyme catalyses sn-glycerol 3-phosphate + NAD(+) = dihydroxyacetone phosphate + NADH + H(+). It carries out the reaction sn-glycerol 3-phosphate + NADP(+) = dihydroxyacetone phosphate + NADPH + H(+). The protein operates within membrane lipid metabolism; glycerophospholipid metabolism. Catalyzes the reduction of the glycolytic intermediate dihydroxyacetone phosphate (DHAP) to sn-glycerol 3-phosphate (G3P), the key precursor for phospholipid synthesis. The chain is Glycerol-3-phosphate dehydrogenase [NAD(P)+] 2 from Mycolicibacterium paratuberculosis (strain ATCC BAA-968 / K-10) (Mycobacterium paratuberculosis).